Reading from the N-terminus, the 98-residue chain is NADH-ubiquinone oxidoreductase chain 4L (98 aa).

3 consecutive transmembrane segments (helical) span residues 1 to 21 (MSLTYMNMLLAFMISLMGLLM), 29 to 49 (SLLCLEGMMLSLFVMMTVTIL), and 61 to 81 (IILLVFAACEAALGLSLLVMV).

This sequence belongs to the complex I subunit 4L family. In terms of assembly, core subunit of respiratory chain NADH dehydrogenase (Complex I) which is composed of 45 different subunits.

The protein resides in the mitochondrion inner membrane. It carries out the reaction a ubiquinone + NADH + 5 H(+)(in) = a ubiquinol + NAD(+) + 4 H(+)(out). In terms of biological role, core subunit of the mitochondrial membrane respiratory chain NADH dehydrogenase (Complex I) which catalyzes electron transfer from NADH through the respiratory chain, using ubiquinone as an electron acceptor. Part of the enzyme membrane arm which is embedded in the lipid bilayer and involved in proton translocation. The polypeptide is NADH-ubiquinone oxidoreductase chain 4L (MT-ND4L) (Sturnira lilium (Lesser yellow-shouldered bat)).